The sequence spans 655 residues: p-hydroxybenzoic acid efflux pump subunit AaeB (655 aa).

The next 11 membrane-spanning stretches (helical) occupy residues 13–33 (FAVK…HFQL), 38–58 (WAVL…GGEP), 69–89 (LRII…ISMI), 93–113 (LLMI…SSLV), 121–141 (WGLS…EPLL), 152–172 (EIVI…PRSI), 370–390 (LFWL…IAVV), 407–427 (FIYG…VIIP), 431–451 (QSML…GIEV), 459–479 (MGAL…TFHF), and 482–502 (FLDS…VILL).

Belongs to the aromatic acid exporter ArAE (TC 2.A.85) family.

The protein localises to the cell inner membrane. In terms of biological role, forms an efflux pump with AaeA. Could function as a metabolic relief valve, allowing to eliminate certain compounds when they accumulate to high levels in the cell. The chain is p-hydroxybenzoic acid efflux pump subunit AaeB from Salmonella agona (strain SL483).